A 412-amino-acid polypeptide reads, in one-letter code: CCA-adding enzyme (412 aa).

Glycine 8 and arginine 11 together coordinate ATP. Residues glycine 8 and arginine 11 each coordinate CTP. Residues aspartate 21 and aspartate 23 each coordinate Mg(2+). ATP-binding residues include arginine 91, arginine 137, and arginine 140. The CTP site is built by arginine 91, arginine 137, and arginine 140.

The protein belongs to the tRNA nucleotidyltransferase/poly(A) polymerase family. Bacterial CCA-adding enzyme type 2 subfamily. The cofactor is Mg(2+).

It carries out the reaction a tRNA precursor + 2 CTP + ATP = a tRNA with a 3' CCA end + 3 diphosphate. The enzyme catalyses a tRNA with a 3' CCA end + 2 CTP + ATP = a tRNA with a 3' CCACCA end + 3 diphosphate. Catalyzes the addition and repair of the essential 3'-terminal CCA sequence in tRNAs without using a nucleic acid template. Adds these three nucleotides in the order of C, C, and A to the tRNA nucleotide-73, using CTP and ATP as substrates and producing inorganic pyrophosphate. tRNA 3'-terminal CCA addition is required both for tRNA processing and repair. Also involved in tRNA surveillance by mediating tandem CCA addition to generate a CCACCA at the 3' terminus of unstable tRNAs. While stable tRNAs receive only 3'-terminal CCA, unstable tRNAs are marked with CCACCA and rapidly degraded. The sequence is that of CCA-adding enzyme from Buchnera aphidicola subsp. Schizaphis graminum (strain Sg).